The primary structure comprises 338 residues: Large ribosomal subunit protein uL10 (338 aa).

Residues 292-338 (LDDDLKERVSSTASAVEAKEEEAPKEEKEEEKEEEEEAPAAGLGMLF) are disordered. The span at 308–318 (EAKEEEAPKEE) shows a compositional bias: basic and acidic residues. Residues 319–329 (KEEEKEEEEEA) are compositionally biased toward acidic residues.

Belongs to the universal ribosomal protein uL10 family. As to quaternary structure, part of the 50S ribosomal subunit. Forms part of the ribosomal stalk which helps the ribosome interact with GTP-bound translation factors. Forms a heptameric L10(L12)2(L12)2(L12)2 complex, where L10 forms an elongated spine to which the L12 dimers bind in a sequential fashion.

In terms of biological role, forms part of the ribosomal stalk, playing a central role in the interaction of the ribosome with GTP-bound translation factors. The polypeptide is Large ribosomal subunit protein uL10 (Methanococcus aeolicus (strain ATCC BAA-1280 / DSM 17508 / OCM 812 / Nankai-3)).